The sequence spans 624 residues: Protein POLLEN DEFECTIVE IN GUIDANCE 1 (624 aa).

The interval 20–63 is disordered; sequence SFENDDTSIRRSSSDPITGNVASESPRDYGKRKRSKKKKKKVNQ. Positions 33-42 are enriched in polar residues; it reads SDPITGNVAS. The span at 49–61 shows a compositional bias: basic residues; it reads GKRKRSKKKKKKV. The next 6 helical transmembrane spans lie at 263–283, 305–325, 391–411, 413–433, 545–565, and 578–598; these read VLID…LTVM, ASEL…ILLG, FVSD…ILLA, AITL…LLVS, LTFV…PVYA, and LWMV…KVLI.

This sequence belongs to the TAPT1 family. In terms of assembly, interacts with CRT3, but not with CRT1 or CNX. As to expression, expressed in inflorescences, siliques, roots and shoots. Expressed in early embryo, endosperm, mature pollen and pollen tubes, synergide cells and weakly in antipodal cells.

The protein resides in the membrane. The protein localises to the endoplasmic reticulum lumen. Functionally, probable component of the calreticulin 3 (CRT3) complex, acting probably as a co-chaperone involved in protein retention in the endoplasmic reticulum lumen. Required for micropylar pollen tube guidance. Plays an essential role in cell plate orientation or positioning in early embryo patterning. The chain is Protein POLLEN DEFECTIVE IN GUIDANCE 1 (POD1) from Arabidopsis thaliana (Mouse-ear cress).